We begin with the raw amino-acid sequence, 103 residues long: Large ribosomal subunit protein bL21 (103 aa).

Belongs to the bacterial ribosomal protein bL21 family. As to quaternary structure, part of the 50S ribosomal subunit. Contacts protein L20.

This protein binds to 23S rRNA in the presence of protein L20. The sequence is that of Large ribosomal subunit protein bL21 from Mannheimia succiniciproducens (strain KCTC 0769BP / MBEL55E).